The following is a 231-amino-acid chain: Urease accessory protein UreF (231 aa).

It belongs to the UreF family. As to quaternary structure, ureD, UreF and UreG form a complex that acts as a GTP-hydrolysis-dependent molecular chaperone, activating the urease apoprotein by helping to assemble the nickel containing metallocenter of UreC. The UreE protein probably delivers the nickel.

The protein localises to the cytoplasm. In terms of biological role, required for maturation of urease via the functional incorporation of the urease nickel metallocenter. In Magnetococcus marinus (strain ATCC BAA-1437 / JCM 17883 / MC-1), this protein is Urease accessory protein UreF.